The sequence spans 317 residues: Probable RuBisCO transcriptional regulator (317 aa).

The 58-residue stretch at 6–63 folds into the HTH lysR-type domain; the sequence is FTLDQLRILKAIAKEGSFKKAANSLYVSQPAISLQIQNLERQLNVALFERGNKKATLT. The H-T-H motif DNA-binding region spans 23-42; that stretch reads FKKAANSLYVSQPAISLQIQ.

Belongs to the LysR transcriptional regulatory family.

It is found in the plastid. Its subcellular location is the chloroplast. In terms of biological role, trans-acting transcriptional regulator of RuBisCO genes (rbcL and rbcS) expression. The protein is Probable RuBisCO transcriptional regulator (rbcR) of Porphyra purpurea (Red seaweed).